We begin with the raw amino-acid sequence, 324 residues long: Phospho-N-acetylmuramoyl-pentapeptide-transferase (324 aa).

A run of 10 helical transmembrane segments spans residues 5 to 25, 50 to 70, 77 to 97, 117 to 137, 147 to 167, 176 to 196, 203 to 223, 227 to 247, 250 to 270, and 304 to 324; these read VMVL…PLFI, GTPT…TLLM, LSVE…LGFL, LIGQ…SGFS, LSIN…VGGS, LDGL…VLAW, IAIF…FNAH, VFMG…VAIL, LEIL…SVII, and VTFW…EVWI.

It belongs to the glycosyltransferase 4 family. MraY subfamily. The cofactor is Mg(2+).

It is found in the cell membrane. The enzyme catalyses UDP-N-acetyl-alpha-D-muramoyl-L-alanyl-gamma-D-glutamyl-meso-2,6-diaminopimeloyl-D-alanyl-D-alanine + di-trans,octa-cis-undecaprenyl phosphate = di-trans,octa-cis-undecaprenyl diphospho-N-acetyl-alpha-D-muramoyl-L-alanyl-D-glutamyl-meso-2,6-diaminopimeloyl-D-alanyl-D-alanine + UMP. It participates in cell wall biogenesis; peptidoglycan biosynthesis. In terms of biological role, catalyzes the initial step of the lipid cycle reactions in the biosynthesis of the cell wall peptidoglycan: transfers peptidoglycan precursor phospho-MurNAc-pentapeptide from UDP-MurNAc-pentapeptide onto the lipid carrier undecaprenyl phosphate, yielding undecaprenyl-pyrophosphoryl-MurNAc-pentapeptide, known as lipid I. The polypeptide is Phospho-N-acetylmuramoyl-pentapeptide-transferase (Geobacillus sp. (strain WCH70)).